Consider the following 175-residue polypeptide: Ribosome maturation factor RimM (175 aa).

Positions E100–L173 constitute a PRC barrel domain.

This sequence belongs to the RimM family. Binds ribosomal protein uS19.

The protein localises to the cytoplasm. Functionally, an accessory protein needed during the final step in the assembly of 30S ribosomal subunit, possibly for assembly of the head region. Essential for efficient processing of 16S rRNA. May be needed both before and after RbfA during the maturation of 16S rRNA. It has affinity for free ribosomal 30S subunits but not for 70S ribosomes. The sequence is that of Ribosome maturation factor RimM from Geobacillus kaustophilus (strain HTA426).